The primary structure comprises 2539 residues: Zinc finger FYVE domain-containing protein 26 (2539 aa).

A phosphoserine mark is found at S297, S615, S619, and S703. Disordered regions lie at residues 594–637 (HLPE…SLGV), 699–724 (ISSR…GLQS), and 738–806 (WRHK…SLSA). The segment covering 764–774 (PSLRRGRRTRR) has biased composition (basic residues). Low complexity predominate over residues 787–805 (SLESTSSELSTSTSEGSLS). Phosphoserine is present on S800. A coiled-coil region spans residues 868–895 (MFMERYQEVIQELAQVEHKIENQNSDAG). The segment at 1267–1296 (DLPLSTPSSPRTTENPTLERKPYSSPRDSS) is disordered. A compositionally biased stretch (polar residues) spans 1271–1282 (STPSSPRTTENP). 4 positions are modified to phosphoserine: S1742, S1764, S1780, and S1782. Residues 1754-1808 (ADPETLPRSPSAEFSPAAPPGISSIHSPSLRERSFPPTQPSQEFVPPATPPARHQ) are disordered. Residues 1760–1769 (PRSPSAEFSP) show a composition bias toward low complexity. Residues 1812–1872 (DETESICMVC…VCDQCYSYCN (61 aa)) form an FYVE-type zinc finger. 8 residues coordinate Zn(2+): C1818, C1821, C1835, C1838, C1843, C1846, C1864, and C1867.

In terms of assembly, interacts with AP5Z1, AP5B1, AP5S1 and SPG11. Interacts with TTC19 and KIF13A. Strongest expression in the adrenal gland, bone marrow, adult brain, fetal brain, lung, placenta, prostate, skeletal muscle, testis, thymus, and retina. Intermediate levels are detected in other structures, including the spinal cord.

It localises to the cytoplasm. The protein resides in the cytoskeleton. The protein localises to the microtubule organizing center. Its subcellular location is the centrosome. It is found in the midbody. Its function is as follows. Phosphatidylinositol 3-phosphate-binding protein required for the abscission step in cytokinesis: recruited to the midbody during cytokinesis and acts as a regulator of abscission. May also be required for efficient homologous recombination DNA double-strand break repair. The polypeptide is Zinc finger FYVE domain-containing protein 26 (ZFYVE26) (Homo sapiens (Human)).